Reading from the N-terminus, the 537-residue chain is Lariat debranching enzyme (537 aa).

Positions 8, 10, 39, and 84 each coordinate a divalent metal cation. The tract at residues Ser124–Arg154 is lariat recognition loop. A divalent metal cation is bound by residues His174, His226, and His228. 2 disordered regions span residues Lys242–Pro272 and Thr473–Asp537. A compositionally biased stretch (low complexity) spans Ser251–Ser260.

The protein belongs to the lariat debranching enzyme family. Requires Fe(2+) as cofactor. Zn(2+) serves as cofactor. It depends on Mn(2+) as a cofactor.

Its subcellular location is the nucleus. With respect to regulation, active in presence of diverse metals including Fe(2+), Zn(2+), Mn(2+). Binds two metal cations in two adjacent alpha and beta metal-binding pockets. Its function is as follows. Cleaves the 2'-5' phosphodiester linkage at the branch point of lariat intron pre-mRNAs after splicing and converts them into linear molecules that are subsequently degraded. It thereby facilitates ribonucleotide turnover. The sequence is that of Lariat debranching enzyme (DBR1) from Drosophila pseudoobscura pseudoobscura (Fruit fly).